A 204-amino-acid polypeptide reads, in one-letter code: MRIILASSSPRRRQLMELLGIEFEVEKPDVEEEFLESPEETVRELSLRKAEWVFKKRKEEEILVIGSDTVVVLDGNILGKPESLEEAKGMLKKLSGEWHVVYTGVAFVSSETKDVIVSSTKVRFRELPESVIDYYVEKYRPLDKAGAYGIQDFAAVFVEKIEGDFFTVVGFPLGMVWQYLYEKGWWKFASKREDDKGGARVAFG.

D68 acts as the Proton acceptor in catalysis.

The protein belongs to the Maf family. YhdE subfamily. A divalent metal cation serves as cofactor.

Its subcellular location is the cytoplasm. The catalysed reaction is dTTP + H2O = dTMP + diphosphate + H(+). It carries out the reaction UTP + H2O = UMP + diphosphate + H(+). Nucleoside triphosphate pyrophosphatase that hydrolyzes dTTP and UTP. May have a dual role in cell division arrest and in preventing the incorporation of modified nucleotides into cellular nucleic acids. This Thermotoga petrophila (strain ATCC BAA-488 / DSM 13995 / JCM 10881 / RKU-1) protein is dTTP/UTP pyrophosphatase.